Consider the following 362-residue polypeptide: Phosphoserine aminotransferase (362 aa).

The L-glutamate site is built by serine 9 and arginine 42. Pyridoxal 5'-phosphate-binding positions include 76 to 77 (GR), tryptophan 102, threonine 153, aspartate 174, and glutamine 197. At lysine 198 the chain carries N6-(pyridoxal phosphate)lysine. 239 to 240 (NT) contacts pyridoxal 5'-phosphate.

Belongs to the class-V pyridoxal-phosphate-dependent aminotransferase family. SerC subfamily. Homodimer. Requires pyridoxal 5'-phosphate as cofactor.

It localises to the cytoplasm. It catalyses the reaction O-phospho-L-serine + 2-oxoglutarate = 3-phosphooxypyruvate + L-glutamate. The enzyme catalyses 4-(phosphooxy)-L-threonine + 2-oxoglutarate = (R)-3-hydroxy-2-oxo-4-phosphooxybutanoate + L-glutamate. Its pathway is amino-acid biosynthesis; L-serine biosynthesis; L-serine from 3-phospho-D-glycerate: step 2/3. It participates in cofactor biosynthesis; pyridoxine 5'-phosphate biosynthesis; pyridoxine 5'-phosphate from D-erythrose 4-phosphate: step 3/5. Catalyzes the reversible conversion of 3-phosphohydroxypyruvate to phosphoserine and of 3-hydroxy-2-oxo-4-phosphonooxybutanoate to phosphohydroxythreonine. The protein is Phosphoserine aminotransferase of Salmonella newport (strain SL254).